The primary structure comprises 81 residues: Beta-toxin Ct13 (81 aa).

Residues 1 to 18 form the signal peptide; the sequence is MKVLILIIASVLLIGVEC. In terms of domain architecture, LCN-type CS-alpha/beta spans 19 to 78; sequence KDGFPVDSEGCILLPCATRAYCSVNCKFMKGSGGSCDTLACHCKGLPEDAKVQDKPTNKC. 4 disulfide bridges follow: Cys29-Cys78, Cys34-Cys54, Cys40-Cys59, and Cys44-Cys61. Cys78 carries the cysteine amide modification.

It belongs to the long (4 C-C) scorpion toxin superfamily. Sodium channel inhibitor family. Beta subfamily. As to expression, expressed by the venom gland.

The protein localises to the secreted. Its function is as follows. Beta toxins bind voltage-independently at site-4 of sodium channels (Nav) and shift the voltage of activation toward more negative potentials thereby affecting sodium channel activation and promoting spontaneous and repetitive firing. The polypeptide is Beta-toxin Ct13 (Centruroides tecomanus (Scorpion)).